The chain runs to 1502 residues: Heme-responsive zinc finger transcription factor HAP1 (1502 aa).

The segment covering 1-50 has biased composition (polar residues); that stretch reads MSNTPYNSSVPSIASMTQSSVSRSPNMHTATTPGANTSSNSPPLHMSSDS. The segment at 1–56 is disordered; sequence MSNTPYNSSVPSIASMTQSSVSRSPNMHTATTPGANTSSNSPPLHMSSDSSKIKRK. Residues cysteine 64, cysteine 67, cysteine 74, cysteine 81, cysteine 84, and cysteine 93 each contribute to the Zn(2+) site. The segment at residues 64 to 93 is a DNA-binding region (zn(2)-C6 fungal-type); the sequence is CTICRKRKVKCDKLRPHCQQCTKTGVAHLC. Residues 105-134 are a coiled coil; it reads EKELLKDNELKKLRERVKSLEKTLSKVHSS. A disordered region spans residues 126-208; the sequence is KTLSKVHSSP…ANSSSLSISN (83 aa). Positions 130–142 are enriched in low complexity; sequence KVHSSPSSNSLKS. 2 stretches are compositionally biased toward polar residues: residues 143 to 152 and 160 to 176; these read YNTPESSNLF and TLVN…SHMH. A compositionally biased stretch (low complexity) spans 177–208; the sequence is QQQQQQQQQEQQQDFSRSANANANSSSLSISN. The segment at 244–444 is heme-responsive; required for HMC formation; that stretch reads KGDPYLKLLW…NTIPHHQPQS (201 aa). HRM repeat units follow at residues 280-285, 299-304, 323-328, 347-352, 389-394, and 415-420; these read KCPINH, KCPVDH, RCPVDH, and RCPIDH. 2 stretches are compositionally biased toward polar residues: residues 432-447 and 706-734; these read STHN…SGSH and QLNA…NPTL. 2 disordered regions span residues 432–458 and 706–767; these read STHN…SRKH and QLNA…KENQ. Over residues 735 to 759 the composition is skewed to low complexity; the sequence is NNNMSAATTNSSSRSGSADSRSGSN. The stretch at 1192 to 1197 is one HRM 7 repeat; that stretch reads KCPVYQ. Positions 1384–1411 are disordered; that stretch reads TANTDTSANGSALSTLTSPQGSDLASNS. Residues 1388–1411 show a composition bias toward polar residues; it reads DTSANGSALSTLTSPQGSDLASNS.

As to quaternary structure, binds DNA as a homodimer. Interacts with SRO9 and YDJ1. In the absence of heme, binds to at least four cellular proteins, including YDJ1 and SRO9, forming a high-molecular-weight complex (HMC) which results in repression of its activity and dictates its DNA-binding specificity.

It localises to the nucleus. Functionally, regulation of oxygen dependent gene expression. It modulates the expression of Iso-1 (CYP1) and Iso-2 (CYP3) cytochrome c. In response to heme, promotes transcription of genes encoding functions required for respiration, controlling oxidative damage and repression of anaerobic genes. Binds to the sequence 5'-CGGNNNTNNCGG-3'. Is non-functional in terms of iso-1 cytochrome c expression in strain S288c and its derivatives. The chain is Heme-responsive zinc finger transcription factor HAP1 (HAP1) from Saccharomyces cerevisiae (strain ATCC 204508 / S288c) (Baker's yeast).